Consider the following 201-residue polypeptide: 3-isopropylmalate dehydratase small subunit (201 aa).

This sequence belongs to the LeuD family. LeuD type 1 subfamily. In terms of assembly, heterodimer of LeuC and LeuD.

The catalysed reaction is (2R,3S)-3-isopropylmalate = (2S)-2-isopropylmalate. It participates in amino-acid biosynthesis; L-leucine biosynthesis; L-leucine from 3-methyl-2-oxobutanoate: step 2/4. Functionally, catalyzes the isomerization between 2-isopropylmalate and 3-isopropylmalate, via the formation of 2-isopropylmaleate. In Parvibaculum lavamentivorans (strain DS-1 / DSM 13023 / NCIMB 13966), this protein is 3-isopropylmalate dehydratase small subunit.